Consider the following 112-residue polypeptide: Cytochrome c (112 aa).

Residues Cys23, Cys26, His27, and Met89 each contribute to the heme c site.

The protein belongs to the cytochrome c family. In terms of processing, binds 1 heme c group covalently per subunit.

Its subcellular location is the mitochondrion intermembrane space. Its function is as follows. Electron carrier protein. The oxidized form of the cytochrome c heme group can accept an electron from the heme group of the cytochrome c1 subunit of cytochrome reductase. Cytochrome c then transfers this electron to the cytochrome oxidase complex, the final protein carrier in the mitochondrial electron-transport chain. In Chlamydomonas reinhardtii (Chlamydomonas smithii), this protein is Cytochrome c (CYC1).